The primary structure comprises 1407 residues: ABC transporter B family member 6 (1407 aa).

The interval 18 to 65 (LTPVSEVSEPPESPSPYLDPGAEHGGTGTAAQADDEEEMEEPEEMEPP) is disordered. A compositionally biased stretch (acidic residues) spans 50 to 63 (ADDEEEMEEPEEME). Transmembrane regions (helical) follow at residues 84–104 (VLMV…IVYL), 139–159 (IVYI…CWIL), 212–231 (VGNY…IGFV), and 236–258 (IALI…NIFL). The region spanning 86–379 (MVFGSVAAAA…AATNFYSFDQ (294 aa)) is the ABC transmembrane type-1 1 domain. An N-linked (GlcNAc...) asparagine glycan is attached at Asn-291. 2 helical membrane passes run 310–330 (GILI…LAIC) and 351–371 (GEII…NQAA). The 236-residue stretch at 412-647 (IEFRNVYFSY…GNLYAELLKC (236 aa)) folds into the ABC transporter 1 domain. Residue 447–454 (GRNGSGKS) participates in ATP binding. 2 N-linked (GlcNAc...) asparagine glycosylation sites follow: Asn-449 and Asn-663. 2 disordered regions span residues 670 to 696 (AERD…SLQR) and 709 to 815 (NSEE…DGQH). N-linked (GlcNAc...) asparagine glycosylation is present at Asn-727. Residues 733–755 (VGEKEPTIKRQDSFEMRLPELPK) show a composition bias toward basic and acidic residues. The span at 761-770 (PQRQKSNGSD) shows a compositional bias: polar residues. Residue Asn-767 is glycosylated (N-linked (GlcNAc...) asparagine). Residues 835–1123 (AVLGSIGAAI…PFGLAPYILK (289 aa)) form the ABC transmembrane type-1 2 domain. A run of 6 helical transmembrane segments spans residues 840 to 860 (IGAA…ALVV), 880 to 900 (LIIA…HFYF), 958 to 978 (IFIQ…LLGW), 982 to 1002 (LVAL…KLWL), 1061 to 1081 (IGFA…LLLW), and 1102 to 1122 (MVFS…PYIL). The ABC transporter 2 domain maps to 1158-1395 (IELKNIDFCY…NGLYVRLMQP (238 aa)). Asn-1178 carries an N-linked (GlcNAc...) asparagine glycan. Residue 1193 to 1200 (GVSGSGKS) participates in ATP binding. 2 N-linked (GlcNAc...) asparagine glycosylation sites follow: Asn-1260 and Asn-1346.

It belongs to the ABC transporter superfamily. ABCB family. Multidrug resistance exporter (TC 3.A.1.201) subfamily. As to expression, expressed in aerial tissues.

The protein localises to the membrane. The enzyme catalyses (indol-3-yl)acetate(in) + ATP + H2O = (indol-3-yl)acetate(out) + ADP + phosphate + H(+). Probable auxin efflux transporter that contributes, together with ABCB20 and in a FKBP42/TWD1-dependent manner, to the regulation of leaf position and morphology, internode distribution, roots development, and inflorescence organization, probably by modulating auxin repartition. The sequence is that of ABC transporter B family member 6 from Arabidopsis thaliana (Mouse-ear cress).